Reading from the N-terminus, the 246-residue chain is Protein-lysine N-methyltransferase EFM6 (246 aa).

S-adenosyl-L-methionine is bound by residues W51, 87 to 89, D115, W143, and A169; that span reads GSG.

Belongs to the class I-like SAM-binding methyltransferase superfamily. METTL21 family. EFM6 subfamily.

The protein resides in the cytoplasm. S-adenosyl-L-methionine-dependent protein-lysine N-methyltransferase that methylates elongation factor 1-alpha (TEF1 and TEF2) at 'Lys-390'. This is Protein-lysine N-methyltransferase EFM6 from Saccharomyces cerevisiae (strain ATCC 204508 / S288c) (Baker's yeast).